A 338-amino-acid chain; its full sequence is Ketol-acid reductoisomerase (NADP(+)) (338 aa).

The KARI N-terminal Rossmann domain maps to 1-181 (MKVFYDKDCD…GGGRAGIIET (181 aa)). Residues 24 to 27 (YGSQ), Arg47, and Ser52 each bind NADP(+). Residue His107 is part of the active site. Gly133 provides a ligand contact to NADP(+). Residues 182-327 (NFREETETDL…AKLRAMMPWI (146 aa)) enclose the KARI C-terminal knotted domain. Mg(2+) contacts are provided by Asp190, Glu194, Glu226, and Glu230. Ser251 provides a ligand contact to substrate.

This sequence belongs to the ketol-acid reductoisomerase family. Mg(2+) serves as cofactor.

It catalyses the reaction (2R)-2,3-dihydroxy-3-methylbutanoate + NADP(+) = (2S)-2-acetolactate + NADPH + H(+). It carries out the reaction (2R,3R)-2,3-dihydroxy-3-methylpentanoate + NADP(+) = (S)-2-ethyl-2-hydroxy-3-oxobutanoate + NADPH + H(+). The protein operates within amino-acid biosynthesis; L-isoleucine biosynthesis; L-isoleucine from 2-oxobutanoate: step 2/4. It functions in the pathway amino-acid biosynthesis; L-valine biosynthesis; L-valine from pyruvate: step 2/4. Involved in the biosynthesis of branched-chain amino acids (BCAA). Catalyzes an alkyl-migration followed by a ketol-acid reduction of (S)-2-acetolactate (S2AL) to yield (R)-2,3-dihydroxy-isovalerate. In the isomerase reaction, S2AL is rearranged via a Mg-dependent methyl migration to produce 3-hydroxy-3-methyl-2-ketobutyrate (HMKB). In the reductase reaction, this 2-ketoacid undergoes a metal-dependent reduction by NADPH to yield (R)-2,3-dihydroxy-isovalerate. This Janthinobacterium sp. (strain Marseille) (Minibacterium massiliensis) protein is Ketol-acid reductoisomerase (NADP(+)).